The sequence spans 344 residues: Lipase chaperone (344 aa).

The chain crosses the membrane as a helical span at residues 14–34 (AAIYGGVGLAAVAGVAMWSGA).

This sequence belongs to the lipase chaperone family.

Its subcellular location is the cell inner membrane. In terms of biological role, may be involved in the folding of the extracellular lipase during its passage through the periplasm. This Burkholderia cenocepacia (strain ATCC BAA-245 / DSM 16553 / LMG 16656 / NCTC 13227 / J2315 / CF5610) (Burkholderia cepacia (strain J2315)) protein is Lipase chaperone.